A 292-amino-acid chain; its full sequence is 4-hydroxy-tetrahydrodipicolinate synthase (292 aa).

Position 45 (T45) interacts with pyruvate. Y134 acts as the Proton donor/acceptor in catalysis. The Schiff-base intermediate with substrate role is filled by K162. V204 contacts pyruvate.

Belongs to the DapA family. Homotetramer; dimer of dimers.

It is found in the cytoplasm. It carries out the reaction L-aspartate 4-semialdehyde + pyruvate = (2S,4S)-4-hydroxy-2,3,4,5-tetrahydrodipicolinate + H2O + H(+). Its pathway is amino-acid biosynthesis; L-lysine biosynthesis via DAP pathway; (S)-tetrahydrodipicolinate from L-aspartate: step 3/4. Functionally, catalyzes the condensation of (S)-aspartate-beta-semialdehyde [(S)-ASA] and pyruvate to 4-hydroxy-tetrahydrodipicolinate (HTPA). This Marinobacter nauticus (strain ATCC 700491 / DSM 11845 / VT8) (Marinobacter aquaeolei) protein is 4-hydroxy-tetrahydrodipicolinate synthase.